A 140-amino-acid polypeptide reads, in one-letter code: Large ribosomal subunit protein uL11 (140 aa).

The protein belongs to the universal ribosomal protein uL11 family. In terms of assembly, part of the ribosomal stalk of the 50S ribosomal subunit. Interacts with L10 and the large rRNA to form the base of the stalk. L10 forms an elongated spine to which L12 dimers bind in a sequential fashion forming a multimeric L10(L12)X complex. One or more lysine residues are methylated.

Its function is as follows. Forms part of the ribosomal stalk which helps the ribosome interact with GTP-bound translation factors. This Staphylococcus saprophyticus subsp. saprophyticus (strain ATCC 15305 / DSM 20229 / NCIMB 8711 / NCTC 7292 / S-41) protein is Large ribosomal subunit protein uL11.